Here is a 912-residue protein sequence, read N- to C-terminus: Coiled-coil domain-containing protein 162 (912 aa).

Coiled-coil stretches lie at residues 1 to 35 and 220 to 276; these read MFKSLPEEEAFRALTLTLQLVASLHDIVAYTFSFA and VLLG…VVMS.

The chain is Coiled-coil domain-containing protein 162 from Mus musculus (Mouse).